The following is a 161-amino-acid chain: SsrA-binding protein (161 aa).

The tract at residues 137-161 is disordered; the sequence is HDKRTDSKEKDWNRDKARIMKSSLR. The span at 139–154 shows a compositional bias: basic and acidic residues; the sequence is KRTDSKEKDWNRDKAR.

Belongs to the SmpB family.

The protein localises to the cytoplasm. In terms of biological role, required for rescue of stalled ribosomes mediated by trans-translation. Binds to transfer-messenger RNA (tmRNA), required for stable association of tmRNA with ribosomes. tmRNA and SmpB together mimic tRNA shape, replacing the anticodon stem-loop with SmpB. tmRNA is encoded by the ssrA gene; the 2 termini fold to resemble tRNA(Ala) and it encodes a 'tag peptide', a short internal open reading frame. During trans-translation Ala-aminoacylated tmRNA acts like a tRNA, entering the A-site of stalled ribosomes, displacing the stalled mRNA. The ribosome then switches to translate the ORF on the tmRNA; the nascent peptide is terminated with the 'tag peptide' encoded by the tmRNA and targeted for degradation. The ribosome is freed to recommence translation, which seems to be the essential function of trans-translation. In Aliivibrio salmonicida (strain LFI1238) (Vibrio salmonicida (strain LFI1238)), this protein is SsrA-binding protein.